The following is a 650-amino-acid chain: Growth hormone receptor (650 aa).

The N-terminal stretch at 1 to 24 (MDLCQVFLTLALAVTSSTFSGSEA) is a signal peptide. Residues 25–273 (TPATLGKASP…ILEACEEDIQ (249 aa)) lie on the Extracellular side of the membrane. Disulfide bonds link cysteine 56–cysteine 66 and cysteine 109–cysteine 120. The N-linked (GlcNAc...) asparagine glycan is linked to asparagine 123. Cysteine 134 and cysteine 148 are joined by a disulfide. The Fibronectin type-III domain occupies 159–262 (PPIGLNWTLL…EVLRVIFPQT (104 aa)). N-linked (GlcNAc...) asparagine glycosylation is found at asparagine 164, asparagine 169, and asparagine 208. The WSXWS motif signature appears at 248–252 (YSEFS). Residues 274–297 (FPWFLIIIFGIFGVAVMLFVVIFS) traverse the membrane as a helical segment. Topologically, residues 298–650 (KQQRIKMLIL…STDQLNKIMQ (353 aa)) are cytoplasmic. A required for JAK2 binding region spans residues 303 to 390 (KMLILPPVPV…HEKSAGILGA (88 aa)). The Box 1 motif motif lies at 306 to 314 (ILPPVPVPK). The short motif at 349 to 358 (DSWVEFIELD) is the UbE motif element. At serine 350 the chain carries Phosphoserine. Residues 466 to 486 (KPQPLLSSETEATHQLASTPM) are disordered. The span at 470-486 (LLSSETEATHQLASTPM) shows a compositional bias: polar residues. Residues tyrosine 498 and tyrosine 606 each carry the phosphotyrosine modification.

The protein belongs to the type I cytokine receptor family. Type 1 subfamily. On growth hormone (GH) binding, forms homodimers and binds JAK2 via a box 1-containing domain. In terms of processing, the soluble form (GHBP) is produced by phorbol ester-promoted proteolytic cleavage at the cell surface (shedding) by ADAM17/TACE. Shedding is inhibited by growth hormone (GH) binding to the receptor probably due to a conformational change in GHR rendering the receptor inaccessible to ADAM17. On GH binding, phosphorylated on tyrosine residues in the cytoplasmic domain by JAK2. Post-translationally, ubiquitinated by the ECS(SOCS2) complex following ligand-binding and phosphorylation by JAK2, leading to its degradation by the proteasome. Regulation by the ECS(SOCS2) complex acts as a negative feedback loop of growth hormone receptor signaling. Ubiquitination is not sufficient for GHR internalization. Expressed in all tissues tested including, liver, heart, adipose tissue, mammary gland, testes, ovary, brain, kidney and muscle. Highest levels in liver.

Its subcellular location is the cell membrane. It is found in the secreted. Functionally, receptor for pituitary gland growth hormone (GH1) involved in regulating postnatal body growth. On ligand binding, couples to the JAK2/STAT5 pathway. In terms of biological role, the soluble form (GHBP) acts as a reservoir of growth hormone in plasma and may be a modulator/inhibitor of GH signaling. The protein is Growth hormone receptor (Ghr) of Mus musculus (Mouse).